The chain runs to 438 residues: MGLSMDRSPYARTGDQQRGCWYYLRYFFLFVSLIQFLIILGLVLFMIYGNVHATTESSLRATEIRADSLYSQVVGLSASQANLSKQLNISLLVKETVMQQLLTTRREMERINASFRQCQGDLITYINYNRFIAAIILSEKQCQEQLKEVNKTCEALLFKLGEKVKTLEMEVAKEKAVCSKDKESLLAGKRQTEEQLEACGKARERQQQEQQVTEENLRKVQSLCIPLDQEKFQADVLSAWRDSLIYRTLETLPYHYQLMPEYASLRRTCESLPGIMTTKIEELARGLRAGIERVTRENAELRRQKLELERAAQAAQEARARAGTEAQARETQLRAECARQTQLALEEKAALRAQRDNLERELEARKRELEQLRTEVDVRISALDTCVKAKSLPAVPPRVSGPPPNPPPIDPASLEEFKKRILESQRLPVVNPAAQPSG.

Topologically, residues 1-26 (MGLSMDRSPYARTGDQQRGCWYYLRY) are cytoplasmic. Residues 27–47 (FFLFVSLIQFLIILGLVLFMI) form a helical; Signal-anchor for type II membrane protein membrane-spanning segment. Residues 48 to 438 (YGNVHATTES…VVNPAAQPSG (391 aa)) lie on the Extracellular side of the membrane. N-linked (GlcNAc...) asparagine glycosylation is found at N82, N88, N112, and N150. Coiled coils occupy residues 140 to 160 (KQCQ…LFKL), 189 to 224 (KRQT…QSLC), and 281 to 383 (EELA…ISAL). Residues 391-413 (SLPAVPPRVSGPPPNPPPIDPAS) form a disordered region. The span at 394 to 410 (AVPPRVSGPPPNPPPID) shows a compositional bias: pro residues.

Homodimer. As to expression, expressed in lung, kidney, spleen, heart, muscle, eye, pancreas, thyroid, thymus, submaxillary gland, prostate, epididymis, uterus and liver.

The protein localises to the cell membrane. The protein resides in the membrane. It is found in the caveola. It localises to the cytoplasm. Its subcellular location is the perinuclear region. Endothelial cell-specific membrane protein involved in the formation of the diaphragms that bridge endothelial fenestrae. It is also required for the formation of stomata of caveolae and transendothelial channels. Functions in microvascular permeability, endothelial fenestrae contributing to the passage of water and solutes and regulating transcellular versus paracellular flow in different organs. Plays a specific role in embryonic development. The sequence is that of Plasmalemma vesicle-associated protein (Plvap) from Mus musculus (Mouse).